The following is a 108-amino-acid chain: Large ribosomal subunit protein uL24 (108 aa).

This sequence belongs to the universal ribosomal protein uL24 family. Part of the 50S ribosomal subunit.

Functionally, one of two assembly initiator proteins, it binds directly to the 5'-end of the 23S rRNA, where it nucleates assembly of the 50S subunit. In terms of biological role, one of the proteins that surrounds the polypeptide exit tunnel on the outside of the subunit. The chain is Large ribosomal subunit protein uL24 from Frankia casuarinae (strain DSM 45818 / CECT 9043 / HFP020203 / CcI3).